Consider the following 240-residue polypeptide: 14-3-3 protein 3 (240 aa).

This sequence belongs to the 14-3-3 family. Interacts with coactosin. Interacts with ACTO/actophorin.

The protein resides in the cytoplasm. It localises to the cell projection. Its subcellular location is the phagocytic cup. Adapter protein which is required for phagocytosis and motility, probably by regulating actin cytoskeleton dynamics. During phagocytosis, plays a role in the initiation and/or formation of the phagocytic cup and is involved in the recruitment of the actin binding protein coactosin to the phagocytic cup. The protein is 14-3-3 protein 3 of Entamoeba histolytica (strain ATCC 30459 / HM-1:IMSS / ABRM).